The primary structure comprises 391 residues: Elongation factor Tu 1 (391 aa).

One can recognise a tr-type G domain in the interval 10-201 (KLHVNIGTIG…EVDRYIPTPE (192 aa)). A G1 region spans residues 19 to 26 (GHVDHGKT). 19 to 26 (GHVDHGKT) provides a ligand contact to GTP. Thr26 serves as a coordination point for Mg(2+). The G2 stretch occupies residues 55 to 59 (GITIS). The segment at 76 to 79 (DCPG) is G3. GTP contacts are provided by residues 76 to 80 (DCPGH) and 131 to 134 (NKVD). Residues 131–134 (NKVD) are G4. The segment at 169 to 171 (SAL) is G5.

It belongs to the TRAFAC class translation factor GTPase superfamily. Classic translation factor GTPase family. EF-Tu/EF-1A subfamily. Monomer.

It localises to the cytoplasm. The catalysed reaction is GTP + H2O = GDP + phosphate + H(+). GTP hydrolase that promotes the GTP-dependent binding of aminoacyl-tRNA to the A-site of ribosomes during protein biosynthesis. In Bartonella bacilliformis (strain ATCC 35685 / KC583 / Herrer 020/F12,63), this protein is Elongation factor Tu 1.